The following is a 138-amino-acid chain: MAKQSAKGSTTTKRQRGKRREKKNVPRGQAHIQSTFNNTIVTITDPNGNVVCWSSAGQNGFKGSRKSTPYAAQIAAENAARKAIENGMRQIEVFVKGPGAGREAAIRSLQAAGLQVTAITDVTPIPHNGCRPPKRRRV.

Polar residues predominate over residues 1–12 (MAKQSAKGSTTT). The tract at residues 1–37 (MAKQSAKGSTTTKRQRGKRREKKNVPRGQAHIQSTFN) is disordered. Residues 13-22 (KRQRGKRREK) show a composition bias toward basic residues.

Belongs to the universal ribosomal protein uS11 family. As to quaternary structure, part of the 30S ribosomal subunit. Interacts with proteins S7 and S18. Binds to IF-3.

Functionally, located on the platform of the 30S subunit, it bridges several disparate RNA helices of the 16S rRNA. Forms part of the Shine-Dalgarno cleft in the 70S ribosome. The sequence is that of Small ribosomal subunit protein uS11 from Roseiflexus castenholzii (strain DSM 13941 / HLO8).